The following is a 1116-amino-acid chain: ELKS/Rab6-interacting/CAST family member 1 (1116 aa).

Residues 1–54 (MYGSARSVGKVEPSSQSPGRSPRLPRSPRLGHRRTNSTGGSSGSSVGGGSGKTL) are disordered. Lys10 bears the N6-acetyllysine mark. Positions 13 to 28 (PSSQSPGRSPRLPRSP) are enriched in low complexity. Phosphoserine is present on residues Ser17, Ser21, and Ser37. Thr38 is modified (phosphothreonine). Residues 40–51 (GSSGSSVGGGSG) are compositionally biased toward gly residues. Ser55, Ser75, and Ser94 each carry phosphoserine. The stretch at 144–988 (RQARDNTIMD…RMKLMADNYE (845 aa)) forms a coiled coil. Over residues 590–602 (KEKQMSSLKERVK) the composition is skewed to basic and acidic residues. Disordered regions lie at residues 590–609 (KEKQ…ADTT) and 814–836 (ARRR…RKKD). Ser1005 is subject to Phosphoserine. Thr1046 is subject to Phosphothreonine. The 63-residue stretch at 1046-1108 (TPPASYNLDD…DHCPDILEQV (63 aa)) folds into the FIP-RBD domain. Residues 1060-1100 (WENELQKMTRGQLQDELEKGERDNAELQEFANAILQQIADH) are a coiled coil.

In terms of assembly, part of a complex with CHUK, IKBKB and IKBKG. Interacts with CHUK, IKBKB and IKBKG. The interaction with IKBKG is independent of CHUK and IKBKB. Interacts with NFKBIA. Isoform 4 interacts with PPFIA1, and through its C-terminus with the PDZ domains of RIMS1 and RIMS2. Interacts with ERC2/CAST1. Interacts with the GTB-bound forms of RAB6A isoform 1 and isoform 2 and with RAB6B. The interaction was strongest with RAB6B, followed by RAB6A isoform 2 and weakest with RAB6A isoform 1. Interacts with SDCCAG8. Part of a cortical microtubule stabilization complex (CMSC) composed of KANK1, PPFIA1, PPFIBP1, ERC1/ELKS, PHLDB2/LL5beta, CLASPs, KIF21A and possibly additional interactors; within CMSCs KANK1 and PHLDB2/LL5beta appear to be the core components for targeting of microtubule-binding proteins KIF21A and CLASPs, whereas PPFIA1, PPFIBP1 and ERC1/ELKS serve as scaffolds for protein clustering. Widely expressed. Isoform 2 and isoform 4 are abundantly expressed in brain. Isoform 1 and isoform 3 are predominantly expressed in testis and thyroid, and isoform 1 predominates in other tissues tested.

Its subcellular location is the cytoplasm. It localises to the cytoskeleton. It is found in the microtubule organizing center. The protein localises to the centrosome. The protein resides in the membrane. Its subcellular location is the golgi apparatus membrane. It localises to the presynaptic cell membrane. It is found in the cell projection. The protein localises to the podosome. Its function is as follows. Regulatory subunit of the IKK complex. Probably recruits IkappaBalpha/NFKBIA to the complex. May be involved in the organization of the cytomatrix at the nerve terminals active zone (CAZ) which regulates neurotransmitter release. May be involved in vesicle trafficking at the CAZ. May be involved in Rab-6 regulated endosomes to Golgi transport. The chain is ELKS/Rab6-interacting/CAST family member 1 (ERC1) from Homo sapiens (Human).